The sequence spans 231 residues: Ion-translocating oxidoreductase complex subunit E (231 aa).

The next 6 helical transmembrane spans lie at 18–38 (GLVQLLGLCPLLAVTATLTNA), 39–59 (LGLGLATMLVLIGSNILVSLV), 69–89 (IPVFVMIIAALVTSVQLFINA), 93–113 (GLYLSLGIFLPLIVTNCVIIG), 127–147 (STFDGLMMGLGFTLVLCVLGA), and 182–202 (TFLLAMLPPGAFIGMGLLIAL).

It belongs to the NqrDE/RnfAE family. As to quaternary structure, the complex is composed of six subunits: RnfA, RnfB, RnfC, RnfD, RnfE and RnfG.

It is found in the cell inner membrane. Its function is as follows. Part of a membrane-bound complex that couples electron transfer with translocation of ions across the membrane. The sequence is that of Ion-translocating oxidoreductase complex subunit E from Shewanella piezotolerans (strain WP3 / JCM 13877).